Here is a 322-residue protein sequence, read N- to C-terminus: Probable cAMP-dependent protein kinase catalytic subunit (322 aa).

Positions 7–261 (FEFVKVVGVG…ICEIMGHPFF (255 aa)) constitute a Protein kinase domain. Residues 13-21 (VGVGAFGKV) and Lys37 contribute to the ATP site. Residue Asp132 is the Proton acceptor of the active site. Residues 262–322 (KGIDWHEVES…KHLYKVSKGL (61 aa)) form the AGC-kinase C-terminal domain.

The protein belongs to the protein kinase superfamily. AGC Ser/Thr protein kinase family. cAMP subfamily.

It catalyses the reaction L-seryl-[protein] + ATP = O-phospho-L-seryl-[protein] + ADP + H(+). The enzyme catalyses L-threonyl-[protein] + ATP = O-phospho-L-threonyl-[protein] + ADP + H(+). The sequence is that of Probable cAMP-dependent protein kinase catalytic subunit from Encephalitozoon cuniculi (strain GB-M1) (Microsporidian parasite).